Reading from the N-terminus, the 338-residue chain is Lumican (338 aa).

A signal peptide spans Met1–Gly18. The residue at position 19 (Gln19) is a Pyrrolidone carboxylic acid. 4 positions are modified to sulfotyrosine: Tyr20, Tyr21, Tyr23, and Tyr30. Residues Phe28–Pro66 enclose the LRRNT domain. 8 LRR repeats span residues Gly67–Asn88, Asp91–Lys114, Gln117–Lys137, Ser138–Val159, Asn160–Lys181, Ser185–Thr205, Ser206–Arg227, and Gly230–Ser250. An N-linked (GlcNAc...) (keratan sulfate) asparagine glycan is attached at Asn88. Asn127 carries an N-linked (GlcNAc...) (keratan sulfate) asparagine glycan. A glycan (N-linked (GlcNAc...) (keratan sulfate) asparagine) is linked at Asn160. N-linked (GlcNAc...) (keratan sulfate) asparagine glycosylation is present at Asn252. LRR repeat units follow at residues Ser255–Leu276 and Glu277–Lys296. A disulfide bridge links Cys295 with Cys328. Ser304 is modified (phosphoserine). Residues Lys305 to Tyr326 form an LRR 11 repeat.

This sequence belongs to the small leucine-rich proteoglycan (SLRP) family. SLRP class II subfamily. Binds to laminin. Contains keratan sulfate. Post-translationally, cys-37, Cys-41, Cys-43 and Cys-53 are involved in disulfide bonds. In terms of tissue distribution, cornea and other tissues.

The protein localises to the secreted. The protein resides in the extracellular space. It localises to the extracellular matrix. This chain is Lumican (Lum), found in Mus musculus (Mouse).